Here is a 596-residue protein sequence, read N- to C-terminus: Fructan 1-exohydrolase (596 aa).

Residues methionine 1–serine 20 form the signal peptide. Residue aspartate 75 is part of the active site. 3 N-linked (GlcNAc...) asparagine glycosylation sites follow: asparagine 168, asparagine 236, and asparagine 248. An intrachain disulfide couples cysteine 446 to cysteine 492. An N-linked (GlcNAc...) asparagine glycan is attached at asparagine 567.

Belongs to the glycosyl hydrolase 32 family.

The catalysed reaction is Hydrolysis of terminal, non-reducing (2-&gt;1)-linked beta-D-fructofuranose residues in fructans.. Inhibited by sucrose. In terms of biological role, hydrolyzes inulin-type beta-(2,1)-fructans. May play a role as a beta-(2,1)-trimmer during graminan biosynthesis. The protein is Fructan 1-exohydrolase of Aegilops tauschii (Tausch's goatgrass).